The primary structure comprises 251 residues: Pyrroloquinoline-quinone synthase (251 aa).

The protein belongs to the PqqC family.

The enzyme catalyses 6-(2-amino-2-carboxyethyl)-7,8-dioxo-1,2,3,4,7,8-hexahydroquinoline-2,4-dicarboxylate + 3 O2 = pyrroloquinoline quinone + 2 H2O2 + 2 H2O + H(+). Its pathway is cofactor biosynthesis; pyrroloquinoline quinone biosynthesis. Ring cyclization and eight-electron oxidation of 3a-(2-amino-2-carboxyethyl)-4,5-dioxo-4,5,6,7,8,9-hexahydroquinoline-7,9-dicarboxylic-acid to PQQ. This chain is Pyrroloquinoline-quinone synthase, found in Pseudomonas putida (strain W619).